We begin with the raw amino-acid sequence, 587 residues long: D-lactate dehydrogenase [cytochrome] 1, mitochondrial (587 aa).

The 182-residue stretch at 146–327 (SPEQRPRIIL…TEATVKCHVK (182 aa)) folds into the FAD-binding PCMH-type domain.

Belongs to the FAD-binding oxidoreductase/transferase type 4 family. It depends on FAD as a cofactor.

The protein resides in the mitochondrion inner membrane. The enzyme catalyses (R)-lactate + 2 Fe(III)-[cytochrome c] = 2 Fe(II)-[cytochrome c] + pyruvate + 2 H(+). Catalyzes the stereospecific oxidation of D-lactate to pyruvate. In Saccharomyces cerevisiae (strain ATCC 204508 / S288c) (Baker's yeast), this protein is D-lactate dehydrogenase [cytochrome] 1, mitochondrial.